The primary structure comprises 154 residues: Myoglobin (154 aa).

The region spanning 2–148 (GLSDGEWELV…FRNDIAAKYK (147 aa)) is the Globin domain. Serine 4 bears the Phosphoserine mark. Threonine 68 bears the Phosphothreonine mark. Histidine 94 contacts heme b.

The protein belongs to the globin family. As to quaternary structure, monomeric.

It is found in the cytoplasm. It localises to the sarcoplasm. The enzyme catalyses Fe(III)-heme b-[protein] + nitric oxide + H2O = Fe(II)-heme b-[protein] + nitrite + 2 H(+). The catalysed reaction is H2O2 + AH2 = A + 2 H2O. Its function is as follows. Monomeric heme protein which primary function is to store oxygen and facilitate its diffusion within muscle tissues. Reversibly binds oxygen through a pentacoordinated heme iron and enables its timely and efficient release as needed during periods of heightened demand. Depending on the oxidative conditions of tissues and cells, and in addition to its ability to bind oxygen, it also has a nitrite reductase activity whereby it regulates the production of bioactive nitric oxide. Under stress conditions, like hypoxia and anoxia, it also protects cells against reactive oxygen species thanks to its pseudoperoxidase activity. This Elephas maximus (Indian elephant) protein is Myoglobin (MB).